Reading from the N-terminus, the 201-residue chain is Protein GrpE (201 aa).

It belongs to the GrpE family. Homodimer.

Its subcellular location is the cytoplasm. Functionally, participates actively in the response to hyperosmotic and heat shock by preventing the aggregation of stress-denatured proteins, in association with DnaK and GrpE. It is the nucleotide exchange factor for DnaK and may function as a thermosensor. Unfolded proteins bind initially to DnaJ; upon interaction with the DnaJ-bound protein, DnaK hydrolyzes its bound ATP, resulting in the formation of a stable complex. GrpE releases ADP from DnaK; ATP binding to DnaK triggers the release of the substrate protein, thus completing the reaction cycle. Several rounds of ATP-dependent interactions between DnaJ, DnaK and GrpE are required for fully efficient folding. This Shewanella frigidimarina (strain NCIMB 400) protein is Protein GrpE.